The primary structure comprises 603 residues: Arginine--tRNA ligase (603 aa).

Positions 143-153 match the 'HIGH' region motif; sequence PNIAKEMHVGH.

Belongs to the class-I aminoacyl-tRNA synthetase family. As to quaternary structure, monomer.

The protein resides in the cytoplasm. The enzyme catalyses tRNA(Arg) + L-arginine + ATP = L-arginyl-tRNA(Arg) + AMP + diphosphate. This Prochlorococcus marinus (strain MIT 9211) protein is Arginine--tRNA ligase.